The sequence spans 340 residues: tRNA N6-adenosine threonylcarbamoyltransferase (340 aa).

The Fe cation site is built by His115 and His119. Substrate-binding positions include 137–141, Asp170, Gly183, Asp187, and Asn276; that span reads IVSGG. Asp304 contacts Fe cation.

Belongs to the KAE1 / TsaD family. Requires Fe(2+) as cofactor.

It localises to the cytoplasm. It carries out the reaction L-threonylcarbamoyladenylate + adenosine(37) in tRNA = N(6)-L-threonylcarbamoyladenosine(37) in tRNA + AMP + H(+). In terms of biological role, required for the formation of a threonylcarbamoyl group on adenosine at position 37 (t(6)A37) in tRNAs that read codons beginning with adenine. Is involved in the transfer of the threonylcarbamoyl moiety of threonylcarbamoyl-AMP (TC-AMP) to the N6 group of A37, together with TsaE and TsaB. TsaD likely plays a direct catalytic role in this reaction. This Staphylococcus epidermidis (strain ATCC 35984 / DSM 28319 / BCRC 17069 / CCUG 31568 / BM 3577 / RP62A) protein is tRNA N6-adenosine threonylcarbamoyltransferase.